A 686-amino-acid chain; its full sequence is CAI-1 autoinducer sensor kinase/phosphatase CqsS (686 aa).

The next 6 helical transmembrane spans lie at 21–41, 47–64, 77–97, 100–120, 124–144, and 152–172; these read LVGW…EYWF, NLGL…LVFR, GYFL…MMLM, WSTI…LLVH, VMAL…YGLT, and IEWQ…LCFF. Positions 191-416 constitute a Histidine kinase domain; sequence GIAHEMRNPL…EFVLSFPRYD (226 aa). Residue His-194 is modified to Phosphohistidine; by autocatalysis. One can recognise a Response regulatory domain in the interval 569-686; it reads RILVVDDNQS…VLLNKVAAWV (118 aa). Asp-618 is modified (4-aspartylphosphate).

It localises to the cell membrane. The enzyme catalyses ATP + protein L-histidine = ADP + protein N-phospho-L-histidine.. In terms of biological role, senses the quorum-sensing autoinducer CAI-1 ((S)-3-hydroxytridecan-4-one) which probably functions as an intragenus signal. The sensory signal is then relayed to LuxU and LuxO. In Vibrio cholerae serotype O1 (strain ATCC 39315 / El Tor Inaba N16961), this protein is CAI-1 autoinducer sensor kinase/phosphatase CqsS (cqsS).